The primary structure comprises 214 residues: Probable GTP-binding protein EngB (214 aa).

In terms of domain architecture, EngB-type G spans 25–203 (EGAEVAFAGR…EQVITGWLNL (179 aa)). GTP is bound by residues 33 to 40 (GRSNAGKS), 60 to 64 (GRTQL), 80 to 83 (DLPG), 147 to 150 (TKSD), and 182 to 184 (FSS). Mg(2+) contacts are provided by Ser40 and Thr62.

The protein belongs to the TRAFAC class TrmE-Era-EngA-EngB-Septin-like GTPase superfamily. EngB GTPase family. It depends on Mg(2+) as a cofactor.

Necessary for normal cell division and for the maintenance of normal septation. In Teredinibacter turnerae (strain ATCC 39867 / T7901), this protein is Probable GTP-binding protein EngB.